Consider the following 166-residue polypeptide: Cytochrome c-type biogenesis protein CcmE (166 aa).

The Cytoplasmic portion of the chain corresponds to 1–7; the sequence is MTRKQKR. Residues 8–28 form a helical; Signal-anchor for type II membrane protein membrane-spanning segment; it reads LALIASGAVVVSLAVGLVMFA. Residues 29–166 are Periplasmic-facing; that stretch reads LRDNIVFFYS…QTAPQGAQAY (138 aa). The heme site is built by His122 and Tyr126. The interval 139–166 is disordered; sequence GVWQEEGKSEGKPSAIPAQTAPQGAQAY.

The protein belongs to the CcmE/CycJ family.

The protein resides in the cell inner membrane. Its function is as follows. Heme chaperone required for the biogenesis of c-type cytochromes. Transiently binds heme delivered by CcmC and transfers the heme to apo-cytochromes in a process facilitated by CcmF and CcmH. This is Cytochrome c-type biogenesis protein CcmE from Methylocella silvestris (strain DSM 15510 / CIP 108128 / LMG 27833 / NCIMB 13906 / BL2).